Consider the following 242-residue polypeptide: Sensory transduction protein LytT (242 aa).

One can recognise a Response regulatory domain in the interval 2 to 116 (HVLIVDDEPL…KITQVIEKAS (115 aa)). The region spanning 137–241 (IPIQGEDRIY…VKEFKEKLGL (105 aa)) is the HTH LytTR-type domain.

In terms of processing, phosphorylated by LytS.

The protein localises to the cytoplasm. Member of the two-component regulatory system LytS/LytT that probably regulates genes involved in cell wall metabolism. The chain is Sensory transduction protein LytT (lytT) from Enterococcus faecalis (strain ATCC 700802 / V583).